A 450-amino-acid polypeptide reads, in one-letter code: Tubulin alpha chain (450 aa).

GTP contacts are provided by glutamine 11, glutamate 71, serine 140, glycine 144, threonine 145, threonine 179, asparagine 206, and asparagine 228. Glutamate 71 serves as a coordination point for Mg(2+). The active site involves glutamate 254.

It belongs to the tubulin family. Dimer of alpha and beta chains. A typical microtubule is a hollow water-filled tube with an outer diameter of 25 nm and an inner diameter of 15 nM. Alpha-beta heterodimers associate head-to-tail to form protofilaments running lengthwise along the microtubule wall with the beta-tubulin subunit facing the microtubule plus end conferring a structural polarity. Microtubules usually have 13 protofilaments but different protofilament numbers can be found in some organisms and specialized cells. Mg(2+) serves as cofactor.

Its subcellular location is the cytoplasm. It localises to the cytoskeleton. The enzyme catalyses GTP + H2O = GDP + phosphate + H(+). In terms of biological role, tubulin is the major constituent of microtubules, a cylinder consisting of laterally associated linear protofilaments composed of alpha- and beta-tubulin heterodimers. Microtubules grow by the addition of GTP-tubulin dimers to the microtubule end, where a stabilizing cap forms. Below the cap, tubulin dimers are in GDP-bound state, owing to GTPase activity of alpha-tubulin. In Zymoseptoria tritici (Speckled leaf blotch fungus), this protein is Tubulin alpha chain.